The sequence spans 367 residues: Alginate lyase (367 aa).

Positions 1–24 are cleaved as a signal peptide; sequence MTAFKRIFSPALLVLALYGGAAHA. Substrate is bound by residues 63–64, 136–137, and Tyr254; these read SK and HT.

Belongs to the polysaccharide lyase 5 family.

It localises to the periplasm. It catalyses the reaction Eliminative cleavage of alginate to give oligosaccharides with 4-deoxy-alpha-L-erythro-hex-4-enuronosyl groups at their non-reducing ends and beta-D-mannuronate at their reducing end.. Its function is as follows. Catalyzes the depolymerization of alginate by cleaving the beta-1,4 glycosidic bond between two adjacent sugar residues via a beta-elimination mechanism. May serve to degrade mislocalized alginate that is trapped in the periplasmic space. The protein is Alginate lyase of Pseudomonas putida (strain W619).